A 303-amino-acid polypeptide reads, in one-letter code: tRNA-cytidine(32) 2-sulfurtransferase (303 aa).

Residues 45–50 (SGGKDS) carry the PP-loop motif motif. [4Fe-4S] cluster contacts are provided by Cys120, Cys123, and Cys211.

It belongs to the TtcA family. In terms of assembly, homodimer. The cofactor is Mg(2+). Requires [4Fe-4S] cluster as cofactor.

It is found in the cytoplasm. It catalyses the reaction cytidine(32) in tRNA + S-sulfanyl-L-cysteinyl-[cysteine desulfurase] + AH2 + ATP = 2-thiocytidine(32) in tRNA + L-cysteinyl-[cysteine desulfurase] + A + AMP + diphosphate + H(+). Its pathway is tRNA modification. In terms of biological role, catalyzes the ATP-dependent 2-thiolation of cytidine in position 32 of tRNA, to form 2-thiocytidine (s(2)C32). The sulfur atoms are provided by the cysteine/cysteine desulfurase (IscS) system. The polypeptide is tRNA-cytidine(32) 2-sulfurtransferase (Methylobacillus flagellatus (strain ATCC 51484 / DSM 6875 / VKM B-1610 / KT)).